A 100-amino-acid polypeptide reads, in one-letter code: A-type ATP synthase subunit F (100 aa).

The protein belongs to the V-ATPase F subunit family. Has multiple subunits with at least A(3), B(3), C, D, E, F, H, I and proteolipid K(x).

The protein localises to the cell membrane. In terms of biological role, component of the A-type ATP synthase that produces ATP from ADP in the presence of a proton gradient across the membrane. The chain is A-type ATP synthase subunit F from Methanospirillum hungatei JF-1 (strain ATCC 27890 / DSM 864 / NBRC 100397 / JF-1).